The chain runs to 175 residues: Crossover junction endodeoxyribonuclease RuvC (175 aa).

Residues Asp16, Glu76, and Asp148 contribute to the active site. Asp16, Glu76, and Asp148 together coordinate Mg(2+).

This sequence belongs to the RuvC family. Homodimer which binds Holliday junction (HJ) DNA. The HJ becomes 2-fold symmetrical on binding to RuvC with unstacked arms; it has a different conformation from HJ DNA in complex with RuvA. In the full resolvosome a probable DNA-RuvA(4)-RuvB(12)-RuvC(2) complex forms which resolves the HJ. Requires Mg(2+) as cofactor.

It is found in the cytoplasm. The catalysed reaction is Endonucleolytic cleavage at a junction such as a reciprocal single-stranded crossover between two homologous DNA duplexes (Holliday junction).. In terms of biological role, the RuvA-RuvB-RuvC complex processes Holliday junction (HJ) DNA during genetic recombination and DNA repair. Endonuclease that resolves HJ intermediates. Cleaves cruciform DNA by making single-stranded nicks across the HJ at symmetrical positions within the homologous arms, yielding a 5'-phosphate and a 3'-hydroxyl group; requires a central core of homology in the junction. The consensus cleavage sequence is 5'-(A/T)TT(C/G)-3'. Cleavage occurs on the 3'-side of the TT dinucleotide at the point of strand exchange. HJ branch migration catalyzed by RuvA-RuvB allows RuvC to scan DNA until it finds its consensus sequence, where it cleaves and resolves the cruciform DNA. The polypeptide is Crossover junction endodeoxyribonuclease RuvC (Bradyrhizobium diazoefficiens (strain JCM 10833 / BCRC 13528 / IAM 13628 / NBRC 14792 / USDA 110)).